The primary structure comprises 488 residues: GlcNAc-binding protein A (488 aa).

An N-terminal signal peptide occupies residues methionine 1–alanine 24. In terms of domain architecture, Chitin-binding type-4 spans histidine 25–phenylalanine 202. Residues alanine 439–tryptophan 480 form the Chitin-binding type-3 domain.

The protein belongs to the GbpA family.

Its subcellular location is the secreted. In terms of biological role, probably interacts with GlcNAc residues. May promote attachment to both epithelial cell surfaces and chitin. This chain is GlcNAc-binding protein A, found in Photobacterium profundum (strain SS9).